A 701-amino-acid chain; its full sequence is A-type ATP synthase subunit I (701 aa).

The next 10 membrane-spanning stretches (helical) occupy residues 340–360 (WEIS…GLMF), 363–379 (FGNA…FYRY), 388–408 (IPKL…TGLL), 435–455 (LYNL…LLPF), 468–488 (MIFS…LGVI), 498–518 (FLFL…FIFM), 555–575 (GIVW…AILV), 583–603 (WGSA…LLLL), 612–632 (VLVF…MAYL), and 649–669 (IIIL…VVFI).

The protein belongs to the V-ATPase 116 kDa subunit family. Has multiple subunits with at least A(3), B(3), C, D, E, F, H, I and proteolipid K(x).

Its subcellular location is the cell membrane. Component of the A-type ATP synthase that produces ATP from ADP in the presence of a proton gradient across the membrane. The protein is A-type ATP synthase subunit I of Saccharolobus solfataricus (strain ATCC 35092 / DSM 1617 / JCM 11322 / P2) (Sulfolobus solfataricus).